Reading from the N-terminus, the 292-residue chain is MQIVLISGLSGSGKSIALHVLEDAGYYVVDNLPSALLLQLVLHLRGAGYQRVAVAVDMRSGSSIAALPEQVESLRGMVDDLRFIFLEARDDTLIARFSETRRRHPLADENVSLDEAIQRERDALASVAELGHRMDTSDIHANTLRAWIKDFIGAAASEGLTLMFQSFGFKYGIPLDADLVFDVRCLPNPYYDPLLRPLTGRDQGVIDYLEKVPEVGRMAEDIRRFVADWLPAYMRDNRSYLTVAIGCTGGQHRSVYMAEWLARRFADRVRVIVRHRSAARRVQDAPPAVSGK.

ATP is bound at residue 8–15 (GLSGSGKS). 57–60 (DMRS) provides a ligand contact to GTP.

Belongs to the RapZ-like family.

Functionally, displays ATPase and GTPase activities. The chain is Nucleotide-binding protein azo0399 from Azoarcus sp. (strain BH72).